A 407-amino-acid chain; its full sequence is tRNA (guanine(9)-N1)-methyltransferase (407 aa).

The span at Met1 to Gly19 shows a compositional bias: basic and acidic residues. Disordered stretches follow at residues Met1–Arg105 and Glu220–Glu256. A compositionally biased stretch (low complexity) spans Asn20–Gln32. The span at Leu91–Arg103 shows a compositional bias: basic residues. One can recognise an SAM-dependent MTase TRM10-type domain in the interval Ala120 to Lys356. Residues Leu263–Ser264, Gly283, Asp287–Glu291, Cys295, Leu309, and Thr321–Leu323 contribute to the S-adenosyl-L-methionine site. Asp287 acts as the Proton acceptor in catalysis. The segment at Lys353 to Lys407 is disordered. Residues Gln368–Lys386 show a composition bias toward acidic residues. Over residues Ala394 to Lys407 the composition is skewed to polar residues.

This sequence belongs to the class IV-like SAM-binding methyltransferase superfamily. TRM10 family. As to quaternary structure, monomer.

Its subcellular location is the cytoplasm. It localises to the nucleus. The enzyme catalyses guanosine(9) in tRNA + S-adenosyl-L-methionine = N(1)-methylguanosine(9) in tRNA + S-adenosyl-L-homocysteine + H(+). S-adenosyl-L-methionine-dependent guanine N(1)-methyltransferase that catalyzes the formation of N(1)-methylguanine at position 9 (m1G9) in cytoplasmic tRNA. This chain is tRNA (guanine(9)-N1)-methyltransferase, found in Gibberella zeae (strain ATCC MYA-4620 / CBS 123657 / FGSC 9075 / NRRL 31084 / PH-1) (Wheat head blight fungus).